The following is a 457-amino-acid chain: Argininosuccinate lyase (457 aa).

Belongs to the lyase 1 family. Argininosuccinate lyase subfamily.

It is found in the cytoplasm. It catalyses the reaction 2-(N(omega)-L-arginino)succinate = fumarate + L-arginine. It participates in amino-acid biosynthesis; L-arginine biosynthesis; L-arginine from L-ornithine and carbamoyl phosphate: step 3/3. This Citrobacter koseri (strain ATCC BAA-895 / CDC 4225-83 / SGSC4696) protein is Argininosuccinate lyase.